A 295-amino-acid chain; its full sequence is Nucleotide-binding protein YvcJ (295 aa).

16–23 (GMSGAGKT) serves as a coordination point for ATP. 67–70 (DLRG) serves as a coordination point for GTP.

Belongs to the RapZ-like family.

In terms of biological role, displays ATPase and GTPase activities. Can also hydrolyze pNPP. May affect the expression of competence via the phosphorylation of a cellular component. The chain is Nucleotide-binding protein YvcJ (yvcJ) from Bacillus subtilis (strain 168).